A 262-amino-acid chain; its full sequence is MEIAQALILGIVQGLTEWLPISSSGHLVLLQIILLSRSSAAFIALVHAGTLLAVIVAFRRDVFNVIKSFLEGISELPKGSAFSSPERKLPLYILIGTVPVAVLGLALAKYVDEIFGSSKIVGVGLLITAALLYSTKWAGGERPLDLRRALIVGLAQSIAIFPGISRSGATISTALLSGLKREEAIRYSFLLSIPALTGFLILELIVSPAHEILNPEGLVGLLSSFITGLIAIKFLLSIIRRGRLHLFSYYCVIVGIAILSLL.

A run of 8 helical transmembrane segments spans residues 15–35 (LTEWLPISSSGHLVLLQIILL), 38–58 (SSAAFIALVHAGTLLAVIVAF), 91–111 (LYILIGTVPVAVLGLALAKYV), 114–134 (IFGSSKIVGVGLLITAALLYS), 149–169 (ALIVGLAQSIAIFPGISRSGA), 189–209 (FLLSIPALTGFLILELIVSPA), 219–239 (VGLLSSFITGLIAIKFLLSII), and 242–262 (GRLHLFSYYCVIVGIAILSLL).

Belongs to the UppP family.

It localises to the cell membrane. The enzyme catalyses di-trans,octa-cis-undecaprenyl diphosphate + H2O = di-trans,octa-cis-undecaprenyl phosphate + phosphate + H(+). Its function is as follows. Catalyzes the dephosphorylation of undecaprenyl diphosphate (UPP). This Korarchaeum cryptofilum (strain OPF8) protein is Undecaprenyl-diphosphatase.